Consider the following 715-residue polypeptide: Fatty acid oxidation complex subunit alpha (715 aa).

The tract at residues 1-190 (MTTTSAFMLS…KAGLVDDVVP (190 aa)) is enoyl-CoA hydratase. The interval 306–714 (GPLNSVGILG…FWTNGETDQG (409 aa)) is 3-hydroxyacyl-CoA dehydrogenase.

It in the N-terminal section; belongs to the enoyl-CoA hydratase/isomerase family. In the central section; belongs to the 3-hydroxyacyl-CoA dehydrogenase family. As to quaternary structure, heterotetramer of two alpha chains (FadJ) and two beta chains (FadI).

Its subcellular location is the cytoplasm. It catalyses the reaction a (3S)-3-hydroxyacyl-CoA = a (2E)-enoyl-CoA + H2O. The catalysed reaction is a 4-saturated-(3S)-3-hydroxyacyl-CoA = a (3E)-enoyl-CoA + H2O. The enzyme catalyses a (3S)-3-hydroxyacyl-CoA + NAD(+) = a 3-oxoacyl-CoA + NADH + H(+). It carries out the reaction (3S)-3-hydroxybutanoyl-CoA = (3R)-3-hydroxybutanoyl-CoA. Its pathway is lipid metabolism; fatty acid beta-oxidation. Functionally, catalyzes the formation of a hydroxyacyl-CoA by addition of water on enoyl-CoA. Also exhibits 3-hydroxyacyl-CoA epimerase and 3-hydroxyacyl-CoA dehydrogenase activities. This is Fatty acid oxidation complex subunit alpha from Salmonella typhi.